The sequence spans 202 residues: Protein lin-28 homolog A (202 aa).

Disordered stretches follow at residues 1 to 33 (MPPANPHLNHTGGCTKTEEEEAASSEEDSGSFH) and 100 to 128 (SLQVTGPGGAPCVGSEKKPKGTQKRRSKG). The segment covering 18–29 (EEEEAASSEEDS) has biased composition (acidic residues). A CSD domain is found at 33-106 (HGSGVCKWFN…GLESLQVTGP (74 aa)). A flexible linker region spans residues 107 to 130 (GGAPCVGSEKKPKGTQKRRSKGDR). 2 consecutive CCHC-type zinc fingers follow at residues 129 to 146 (DRCFNCGGPNHHAKECQL) and 151 to 168 (KKCHFCQSISHMVANCPI). Zn(2+)-binding residues include Cys131, Cys134, His139, Cys144, Cys153, Cys156, His161, and Cys166. A disordered region spans residues 170–202 (AQQLSPGSQGKSTTSTGEEEDMSHTPLLPESTD). Polar residues predominate over residues 171 to 185 (QQLSPGSQGKSTTST). Phosphoserine is present on Ser174.

This sequence belongs to the lin-28 family. As to quaternary structure, monomer.

It localises to the cytoplasm. It is found in the rough endoplasmic reticulum. Its subcellular location is the P-body. The protein resides in the stress granule. The protein localises to the nucleus. It localises to the nucleolus. In terms of biological role, RNA-binding protein that inhibits processing of pre-let-7 miRNAs and regulates translation of mRNAs that control developmental timing, pluripotency and metabolism. Seems to recognize a common structural G-quartet (G4) feature in its miRNA and mRNA targets. 'Translational enhancer' that drives specific mRNAs to polysomes and increases the efficiency of protein synthesis. Its association with the translational machinery and target mRNAs results in an increased number of initiation events per molecule of mRNA and, indirectly, in mRNA stabilization. Suppressor of microRNA (miRNA) biogenesis, including that of let-7. Binds specific target miRNA precursors (pre-miRNAs), recognizing an 5'-GGAG-3' motif found in their terminal loop, and recruits uridylyltransferase. This results in the terminal uridylation of target pre-miRNAs. Uridylated pre-miRNAs fail to be processed by Dicer and undergo degradation. Localized to the periendoplasmic reticulum area, binds to a large number of spliced mRNAs and inhibits the translation of mRNAs destined for the ER, reducing the synthesis of transmembrane proteins, ER or Golgi lumen proteins, and secretory proteins. Binds to and enhances the translation of mRNAs for several metabolic enzymes, increasing glycolysis and oxidative phosphorylation. Which, with the let-7 repression may enhance tissue repair in adult tissue. This Danio rerio (Zebrafish) protein is Protein lin-28 homolog A (lin28a).